Consider the following 690-residue polypeptide: Protein-glutamine gamma-glutamyltransferase 2 (690 aa).

N-acetylalanine is present on A2. 2 disulfides stabilise this stretch: C230–C370 and C370–C371. Active-site residues include C277, H335, and D358. The Ca(2+) site is built by N398, D400, E436, E446, and E451. K467 carries the N6-acetyllysine modification. A GTP-binding site is contributed by 479 to 486; it reads RIRVGQNM. Residue E542 participates in Ca(2+) binding. GTP is bound at residue 583–586; that stretch reads RDIY. Q636 participates in a covalent cross-link: Isoglutamyl lysine isopeptide (Gln-Lys) (interchain with K-?).

This sequence belongs to the transglutaminase superfamily. Transglutaminase family. Monomer. Interacts with phospholipase C; promoting alpha-1 adrenergic receptor signaling. Interacts with PLCD1. It depends on Ca(2+) as a cofactor. Disulfide bond formation inactivates the calcium-dependent acyltransferase activity. Cys-370 can form disulfide bonds with both Cys-230 and Cys-371: formation of a disulfide bond between Cys-230 and Cys-370 facilitates formation of the disulfide between Cys-370 and Cys-371, which promotes inactivation of the acyltransferase activity. May also form interchain disulfids between Cys-230 and Cys-370. Ca(2+) protects against disulfide bond formation and inactivation. In terms of processing, auto-transglutaminated: Forms covalent cross-links mediated by transglutaminase between Gln-636 and the epsilon-amino group of a lysine residue of itself or HMGB1, forming homopolymers and heteropolymers, respectively. Post-translationally, S-nitrosylated, leading to inactivation of the acyltransferase activity.

The protein resides in the cytoplasm. The protein localises to the cytosol. Its subcellular location is the nucleus. It is found in the chromosome. It localises to the secreted. The protein resides in the extracellular space. The protein localises to the extracellular matrix. Its subcellular location is the cell membrane. It is found in the mitochondrion. The catalysed reaction is L-glutaminyl-[protein] + L-lysyl-[protein] = [protein]-L-lysyl-N(6)-5-L-glutamyl-[protein] + NH4(+). It carries out the reaction L-glutaminyl-[protein] + serotonin = 5-serotonyl-L-glutamyl-[protein] + NH4(+). It catalyses the reaction L-glutaminyl-[protein] + dopamine = 5-dopaminyl-L-glutamyl-[protein] + NH4(+). The enzyme catalyses L-glutaminyl-[protein] + histamine = 5-histaminyl-L-glutamyl-[protein] + NH4(+). The catalysed reaction is L-glutaminyl-[protein] + (R)-noradrenaline = 5-(R)-noradrenalinyl-L-glutamyl-[protein] + NH4(+). It carries out the reaction L-glutaminyl-[protein] + H2O = L-glutamyl-[protein] + NH4(+). With respect to regulation, acyltransferase activity is regulated by the binding of GTP and Ca(2+): inactivated by GTP, which stabilizes its closed structure, thereby obstructing the accessibility of substrates to the active sites. In contrast, Ca(2+) acts as a cofactor by inducing conformational change to the active open form. In absence of Ca(2+), Mg(2+) may bind Ca(2+)-binding sites, promoting GTP-binding and subsequent inhibition of the acyltransferase activity. Extracellularly reduced and activated by CLIC3. Its function is as follows. Calcium-dependent acyltransferase that catalyzes the formation of covalent bonds between peptide-bound glutamine and various primary amines, such as gamma-amino group of peptide-bound lysine, or mono- and polyamines, thereby producing cross-linked or aminated proteins, respectively. Involved in many biological processes, such as bone development, angiogenesis, wound healing, cellular differentiation, chromatin modification and apoptosis. Acts as a protein-glutamine gamma-glutamyltransferase by mediating the cross-linking of proteins, such as ACO2, HSPB6, FN1, HMGB1, RAP1GDS1, SLC25A4/ANT1, SPP1 and WDR54. Under physiological conditions, the protein cross-linking activity is inhibited by GTP; inhibition is relieved by Ca(2+) in response to various stresses. When secreted, catalyzes cross-linking of proteins of the extracellular matrix, such as FN1 and SPP1 resulting in the formation of scaffolds. Plays a key role during apoptosis, both by (1) promoting the cross-linking of cytoskeletal proteins resulting in condensation of the cytoplasm, and by (2) mediating cross-linking proteins of the extracellular matrix, resulting in the irreversible formation of scaffolds that stabilize the integrity of the dying cells before their clearance by phagocytosis, thereby preventing the leakage of harmful intracellular components. In addition to protein cross-linking, can use different monoamine substrates to catalyze a vast array of protein post-translational modifications: mediates aminylation of serotonin, dopamine, noradrenaline or histamine into glutamine residues of target proteins to generate protein serotonylation, dopaminylation, noradrenalinylation or histaminylation, respectively. Mediates protein serotonylation of small GTPases during activation and aggregation of platelets, leading to constitutive activation of these GTPases. Plays a key role in chromatin organization by mediating serotonylation and dopaminylation of histone H3. Catalyzes serotonylation of 'Gln-5' of histone H3 (H3Q5ser) during serotonergic neuron differentiation, thereby facilitating transcription. Acts as a mediator of neurotransmission-independent role of nuclear dopamine in ventral tegmental area (VTA) neurons: catalyzes dopaminylation of 'Gln-5' of histone H3 (H3Q5dop), thereby regulating relapse-related transcriptional plasticity in the reward system. Regulates vein remodeling by mediating serotonylation and subsequent inactivation of ATP2A2/SERCA2. Also acts as a protein deamidase by mediating the side chain deamidation of specific glutamine residues of proteins to glutamate. Catalyzes specific deamidation of protein gliadin, a component of wheat gluten in the diet. May also act as an isopeptidase cleaving the previously formed cross-links. Also able to participate in signaling pathways independently of its acyltransferase activity: acts as a signal transducer in alpha-1 adrenergic receptor-mediated stimulation of phospholipase C-delta (PLCD) activity and is required for coupling alpha-1 adrenergic agonists to the stimulation of phosphoinositide lipid metabolism. This chain is Protein-glutamine gamma-glutamyltransferase 2, found in Cavia cutleri (Guinea pig).